A 449-amino-acid polypeptide reads, in one-letter code: UDP-N-acetylmuramoyl-tripeptide--D-alanyl-D-alanine ligase (449 aa).

Glycine 106–serine 112 contributes to the ATP binding site.

Belongs to the MurCDEF family. MurF subfamily.

It localises to the cytoplasm. It carries out the reaction D-alanyl-D-alanine + UDP-N-acetyl-alpha-D-muramoyl-L-alanyl-gamma-D-glutamyl-meso-2,6-diaminopimelate + ATP = UDP-N-acetyl-alpha-D-muramoyl-L-alanyl-gamma-D-glutamyl-meso-2,6-diaminopimeloyl-D-alanyl-D-alanine + ADP + phosphate + H(+). It functions in the pathway cell wall biogenesis; peptidoglycan biosynthesis. In terms of biological role, involved in cell wall formation. Catalyzes the final step in the synthesis of UDP-N-acetylmuramoyl-pentapeptide, the precursor of murein. This Rickettsia prowazekii (strain Madrid E) protein is UDP-N-acetylmuramoyl-tripeptide--D-alanyl-D-alanine ligase.